We begin with the raw amino-acid sequence, 200 residues long: Adenylyl-sulfate kinase (200 aa).

Residue glycine 36–serine 43 coordinates ATP. Catalysis depends on serine 110, which acts as the Phosphoserine intermediate.

Belongs to the APS kinase family.

It carries out the reaction adenosine 5'-phosphosulfate + ATP = 3'-phosphoadenylyl sulfate + ADP + H(+). The protein operates within sulfur metabolism; hydrogen sulfide biosynthesis; sulfite from sulfate: step 2/3. Its function is as follows. Catalyzes the synthesis of activated sulfate. This is Adenylyl-sulfate kinase from Clostridium acetobutylicum (strain ATCC 824 / DSM 792 / JCM 1419 / IAM 19013 / LMG 5710 / NBRC 13948 / NRRL B-527 / VKM B-1787 / 2291 / W).